The chain runs to 710 residues: E3 ubiquitin-protein ligase TRIM9 (710 aa).

An RING-type zinc finger spans residues 10 to 50; the sequence is CPVCGSFYREPIILPCSHNLCQACARNILVQTPESESPQSH. Threonine 41 bears the Phosphothreonine mark. 3 positions are modified to phosphoserine: serine 44, serine 46, and serine 49. 2 B box-type zinc fingers span residues 163 to 212 and 224 to 266; these read AAAL…LVPP and RKVS…VKAL. Positions 168, 171, 193, 198, 229, 232, 252, and 258 each coordinate Zn(2+). The stretch at 273–340 forms a coiled coil; sequence HKSQLSQALN…KAQLLARVNK (68 aa). The region spanning 374 to 432 is the COS domain; the sequence is IKENDPSGFLQISDALIRRVHLTEDQWGKGTLTPRMTTDFDLSLDNSPLLQSIHQLDFV. The Fibronectin type-III domain occupies 440-535; that stretch reads VPATPILQLE…KTLVLQTSEV (96 aa). The region spanning 533-702 is the B30.2/SPRY domain; that stretch reads SEVAWFAFDP…LHTGLPVPDF (170 aa).

Belongs to the TRIM/RBCC family. In terms of assembly, interacts with SNAP25. Auto-ubiquitinated. Poly-ubiquitinated in cultured cells, whereas it is monoubiquitinated in vitro. As to expression, brain. Highly expressed in the cerebral cortex (at protein level). Severely decreased in the affected brain areas in Parkinson disease and dementia with Lewy bodies.

The protein resides in the cytoplasm. The protein localises to the cell projection. It localises to the dendrite. It is found in the cytoplasmic vesicle. Its subcellular location is the secretory vesicle. The protein resides in the synaptic vesicle. The protein localises to the synapse. It localises to the cytoskeleton. The catalysed reaction is S-ubiquitinyl-[E2 ubiquitin-conjugating enzyme]-L-cysteine + [acceptor protein]-L-lysine = [E2 ubiquitin-conjugating enzyme]-L-cysteine + N(6)-ubiquitinyl-[acceptor protein]-L-lysine.. The protein operates within protein modification; protein ubiquitination. Functionally, E3 ubiquitin-protein ligase which ubiquitinates itself in cooperation with an E2 enzyme UBE2D2/UBC4 and serves as a targeting signal for proteasomal degradation. May play a role in regulation of neuronal functions and may also participate in the formation or breakdown of abnormal inclusions in neurodegenerative disorders. May act as a regulator of synaptic vesicle exocytosis by controlling the availability of SNAP25 for the SNARE complex formation. This chain is E3 ubiquitin-protein ligase TRIM9 (TRIM9), found in Homo sapiens (Human).